The chain runs to 155 residues: Protein-export protein SecB (155 aa).

Belongs to the SecB family. Homotetramer, a dimer of dimers. One homotetramer interacts with 1 SecA dimer.

It localises to the cytoplasm. In terms of biological role, one of the proteins required for the normal export of preproteins out of the cell cytoplasm. It is a molecular chaperone that binds to a subset of precursor proteins, maintaining them in a translocation-competent state. It also specifically binds to its receptor SecA. The polypeptide is Protein-export protein SecB (Cronobacter sakazakii (strain ATCC BAA-894) (Enterobacter sakazakii)).